A 296-amino-acid chain; its full sequence is GTPase Era (296 aa).

Positions 7 to 174 (KAGYISIVGR…TEVIRHYLPE (168 aa)) constitute an Era-type G domain. Residues 15–22 (GRPNVGKS) are G1. A GTP-binding site is contributed by 15–22 (GRPNVGKS). Positions 41-45 (QTTRH) are G2. Positions 62 to 65 (DTPG) are G3. GTP is bound by residues 62–66 (DTPGF) and 123–126 (NKID). Residues 123–126 (NKID) form a G4 region. The tract at residues 153–155 (VSA) is G5. The KH type-2 domain occupies 205–281 (IGEEVPYSVS…YLEIWVKVKS (77 aa)).

Belongs to the TRAFAC class TrmE-Era-EngA-EngB-Septin-like GTPase superfamily. Era GTPase family. In terms of assembly, monomer.

The protein localises to the cytoplasm. It is found in the cell inner membrane. Functionally, an essential GTPase that binds both GDP and GTP, with rapid nucleotide exchange. Plays a role in 16S rRNA processing and 30S ribosomal subunit biogenesis and possibly also in cell cycle regulation and energy metabolism. The sequence is that of GTPase Era from Nitrosomonas eutropha (strain DSM 101675 / C91 / Nm57).